The sequence spans 665 residues: Macrolide export ATP-binding/permease protein MacB (665 aa).

Positions 17–255 (MQVKGLIREF…AAQPASIIDK (239 aa)) constitute an ABC transporter domain. An ATP-binding site is contributed by 53–60 (GQSGSGKS). The next 4 helical transmembrane spans lie at 287 to 307 (LLTM…VGLG), 544 to 564 (IAII…LVSV), 588 to 608 (FLIE…GLAF), and 630 to 650 (SIIA…FLPA).

This sequence belongs to the ABC transporter superfamily. Macrolide exporter (TC 3.A.1.122) family. In terms of assembly, homodimer. Part of the tripartite efflux system MacAB-TolC, which is composed of an inner membrane transporter, MacB, a periplasmic membrane fusion protein, MacA, and an outer membrane component, TolC. The complex forms a large protein conduit and can translocate molecules across both the inner and outer membranes. Interacts with MacA.

Its subcellular location is the cell inner membrane. In terms of biological role, part of the tripartite efflux system MacAB-TolC. MacB is a non-canonical ABC transporter that contains transmembrane domains (TMD), which form a pore in the inner membrane, and an ATP-binding domain (NBD), which is responsible for energy generation. Confers resistance against macrolides. The chain is Macrolide export ATP-binding/permease protein MacB from Psychrobacter cryohalolentis (strain ATCC BAA-1226 / DSM 17306 / VKM B-2378 / K5).